The following is a 406-amino-acid chain: Glycosyltransferase GlyE (406 aa).

Residues 3-265 (NTKRAVVFAG…SVILNEWFSK (263 aa)) are GT8 domain. Residues 11–16 (AGDYAY) and 106–107 (DS) each bind UDP. Residues Asp-106, Asp-108, and His-227 each contribute to the Mn(2+) site. 227-233 (HYISQDK) serves as a coordination point for UDP.

The protein in the N-terminal section; belongs to the glycosyltransferase 8 family. It depends on Mn(2+) as a cofactor.

The protein operates within protein modification; protein glycosylation. Functionally, involved in the polymorphic O-glycosylation of the serine-rich repeat protein PsrP. Catalyzes the third step in glycosylation of PsrP in this bacteria. Transfers galactose from UDP-galactose to the terminal glucose moiety of already-glycosylated PsrP (using the short substrate PsrP-GlcNAc-Glc). Has a very marked preference for PsrP substrate that has already been modified by GlcNAc and glucose. Has hydrolytic activity against UDP-galactose but none against UDP-glucose. In terms of biological role, also catalyzes the fourth step in glycosylation of PsrP in this bacteria. Can transfer the sugar from UDP-galactose to the terminal sugar moiety of PsrP-GlcNAc-Glc-Glc and of PsrP-GlcNAc-Glc-Gal. This chain is Glycosyltransferase GlyE, found in Streptococcus pneumoniae serotype 4 (strain ATCC BAA-334 / TIGR4).